A 142-amino-acid chain; its full sequence is MKTFTAKPSNIKREWLLIDATDKTLGRLATEVAMILRGKNKPEYTPHMDTGDYVVIVNAEKIAVTGNKRKAKTYYHHTGYIGGIKSVSFEKLIATHPERAIEKAVRGMLPRTPLGRTMFKKLKVYAGEAHPHTAQQPKAHNI.

Belongs to the universal ribosomal protein uL13 family. As to quaternary structure, part of the 50S ribosomal subunit.

In terms of biological role, this protein is one of the early assembly proteins of the 50S ribosomal subunit, although it is not seen to bind rRNA by itself. It is important during the early stages of 50S assembly. The protein is Large ribosomal subunit protein uL13 of Francisella tularensis subsp. holarctica (strain FTNF002-00 / FTA).